We begin with the raw amino-acid sequence, 204 residues long: Probable UMP-CMP kinase 1 (204 aa).

Gly31–Thr36 provides a ligand contact to ATP. Residues Ser51–Val80 form an NMP region. A ribonucleoside 5'-phosphate contacts are provided by residues Arg57, Arg78–Val80, and Gly105–Arg108. Residue Asn112 coordinates CMP. The interval Ser143 to Asp151 is LID. Arg144 is a binding site for ATP. A ribonucleoside 5'-phosphate is bound by residues Arg148 and Arg159. Residue Lys187 coordinates ATP.

It belongs to the adenylate kinase family. UMP-CMP kinase subfamily. As to quaternary structure, monomer. Requires Mg(2+) as cofactor.

The protein resides in the cytoplasm. It localises to the nucleus. The enzyme catalyses CMP + ATP = CDP + ADP. The catalysed reaction is dCMP + ATP = dCDP + ADP. It carries out the reaction UMP + ATP = UDP + ADP. Functionally, catalyzes the phosphorylation of pyrimidine nucleoside monophosphates at the expense of ATP. Plays an important role in de novo pyrimidine nucleotide biosynthesis. Has preference for UMP and CMP as phosphate acceptors. This chain is Probable UMP-CMP kinase 1 (UMK1), found in Arabidopsis thaliana (Mouse-ear cress).